Reading from the N-terminus, the 661-residue chain is Vasorin (661 aa).

The first 19 residues, 1 to 19, serve as a signal peptide directing secretion; that stretch reads MWHLLVWIILLATAQQMIT. Residues 20–50 enclose the LRRNT domain; that stretch reads EGCPAGCQCNTPQTVFCLARKNSNFPRSVPP. The Extracellular portion of the chain corresponds to 20-563; it reads EGCPAGCQCN…VTQSQEGNLT (544 aa). LRR repeat units follow at residues 52 to 72, 75 to 96, 99 to 120, 123 to 144, 147 to 168, 169 to 189, 191 to 212, 215 to 237, 238 to 258, and 259 to 281; these read TLNLYVFENGISSIEESSFIG, GLHLLDLSHNQLSSLPGGVFRN, NLSNLDLTSNQLTEISADTFQG, RLERLYLNGNRIRSIHPEAFKG, SLLELKLSNNQLVTPPAFSLPH, LLLLDLSYNAIPVIQQGVFNA, NIESLRLAGLGLKEVPEELLSG, NLHELDLSDNQLDKVPPGLHGLT, KLNIAGNVGFSQIQVDDLSNL, and PALQELDLSGLSLQTLPKGLFRS. Residue Asn-99 is glycosylated (N-linked (GlcNAc...) asparagine). One can recognise an LRRCT domain in the interval 293 to 346; the sequence is NPFNCVCSLGWLSEWMRVSGVVLLRPDETRCHFPPKNAGKTLRQLRDSEYGCPA. Positions 348–385 are enriched in low complexity; sequence TTIQMPSTMPPSTTTGPPTTTKHLQTEAPTTASTTTTT. The tract at residues 348 to 395 is disordered; sequence TTIQMPSTMPPSTTTGPPTTTKHLQTEAPTTASTTTTTIPHQEQEEDT. Residues 403-440 enclose the EGF-like domain; the sequence is EDTLCPPQTCLNGGSCHLDPTGQLECECPPGFQGTYCE. 3 cysteine pairs are disulfide-bonded: Cys-407–Cys-418, Cys-412–Cys-428, and Cys-430–Cys-439. Residues 455–543 form the Fibronectin type-III domain; that stretch reads EQVKIIEVTV…EEDLCTETHT (89 aa). N-linked (GlcNAc...) asparagine glycans are attached at residues Asn-518 and Asn-561. The helical transmembrane segment at 564-584 threads the bilayer; it reads LVLVPAVAAGILLSAAVAAAA. Over 585–661 the chain is Cytoplasmic; sequence CYARRRKGKG…PTGRLPHSYF (77 aa). A disordered region spans residues 591–661; it reads KGKGHSVEDG…PTGRLPHSYF (71 aa). A compositionally biased stretch (basic and acidic residues) spans 606–623; the sequence is DGVKKGLDGKGEVKKLSE.

The protein localises to the membrane. May act as an inhibitor of TGF-beta signaling. This is Vasorin (vasn) from Xenopus tropicalis (Western clawed frog).